The following is a 499-amino-acid chain: Thermostable carboxypeptidase 1 (499 aa).

Residues 6 to 499 (QNETIKQILA…FVRWVKEKYL (494 aa)) enclose the Peptidase M32 domain. The short motif at 238 to 240 (HPF) is the HPF element. Residues 248-252 (DVRIT) carry the DXRXT motif. H269 contributes to the Co(2+) binding site. Residues 269–273 (HEFGH) carry the HEXXH motif. E270 serves as the catalytic Proton donor/acceptor. Residues H273 and E299 each contribute to the Co(2+) site. An HES/GQ motif is present at residues 298-301 (HESQ). The short motif at 350–355 (IRTEAD) is the I/NRXXA/SD element. The GXXQDXHW signature appears at 405–412 (GILQDIHW).

The protein belongs to the peptidase M32 family. As to quaternary structure, homodimer. Co(2+) serves as cofactor. The cofactor is Mn(2+).

The catalysed reaction is Release of a C-terminal amino acid with broad specificity, except for -Pro.. Its activity is regulated as follows. EDTA and DTT reversibly abolish carboxypeptidase activity. In terms of biological role, broad specificity carboxypetidase that releases amino acids sequentially from the C-terminus, including neutral, aromatic, polar and basic residues, but not Pro, Gly, Asp and Glu. This is Thermostable carboxypeptidase 1 from Pyrococcus furiosus (strain ATCC 43587 / DSM 3638 / JCM 8422 / Vc1).